A 285-amino-acid chain; its full sequence is 2-dehydro-3-deoxyphosphooctonate aldolase (285 aa).

Belongs to the KdsA family.

The protein resides in the cytoplasm. The enzyme catalyses D-arabinose 5-phosphate + phosphoenolpyruvate + H2O = 3-deoxy-alpha-D-manno-2-octulosonate-8-phosphate + phosphate. The protein operates within carbohydrate biosynthesis; 3-deoxy-D-manno-octulosonate biosynthesis; 3-deoxy-D-manno-octulosonate from D-ribulose 5-phosphate: step 2/3. It functions in the pathway bacterial outer membrane biogenesis; lipopolysaccharide biosynthesis. The sequence is that of 2-dehydro-3-deoxyphosphooctonate aldolase from Acinetobacter baumannii (strain SDF).